The chain runs to 352 residues: Dysbindin (352 aa).

Phosphoserine is present on Ser-11. Residues 92-180 (TSLAELQEQL…AELDTEHAQK (89 aa)) adopt a coiled-coil conformation. The short motif at 243 to 256 (LMDLSDQEALDVFL) is the Nuclear export signal element. The disordered stretch occupies residues 267–352 (SPGLEMESNP…SDQCDSTQDI (86 aa)). Residues 274–285 (SNPSQNEMNLQI) show a composition bias toward polar residues. Over residues 286 to 301 (PNPSESASQPPASPSA) the composition is skewed to low complexity. Residues Ser-340 and Ser-343 each carry the phosphoserine modification.

It belongs to the dysbindin family. In terms of assembly, interacts (via its coiled coil domain) with KXD1. Interacts with AP3B2, TRIM32, CMYA5, PI4K2 and RNF151. Interacts with the DNA-dependent protein kinase complex DNA-PK; the interaction phosphorylates DTNBP1 in vitro. Interacts directly in this complex with XRCC5 and XRCC6. Interacts with XPO1; the interaction exports DTNBP1 out of the nucleus. Component of the biogenesis of lysosome-related organelles complex 1 (BLOC-1) composed of at least BLOC1S1, BLOC1S2, BLOC1S3, BLOC1S4, BLOC1S5, BLOC1S6, DTNBP1/BLOC1S7 and SNAPIN/BLOC1S8. Interacts directly in the complex with BLOC1S5, BLOC1S6 and SNAPIN/BLOC1S8. The BLOC-1 complex associates with the AP-3 protein complex and membrane protein cargos. This BLOC-1 complex also associates with the BLOC-2 complex in endosomes. Binds to DTNA and DTNB but may not be a physiological binding partner. Interacts with AP3M1. Ubiquitinated by TRIM32. Ubiquitination leads to DTNBP1 degradation. Detected in hippocampus neurons (at protein level). Ubiquitously expressed. The highest expression is observed in testis, liver, kidney, brain, heart and lung. In the brain, found primarily in axon bundles and axon terminals, notably in the cerebellum and hippocampus. Expressed at lower levels in stomach, small intestine and skeletal muscle, where it is detected at the sarcolemma.

It localises to the cytoplasm. It is found in the cytoplasmic vesicle membrane. The protein resides in the cytoplasmic vesicle. The protein localises to the secretory vesicle. Its subcellular location is the synaptic vesicle membrane. It localises to the endosome membrane. It is found in the melanosome membrane. The protein resides in the nucleus. The protein localises to the postsynaptic density. Its subcellular location is the presynaptic cell membrane. It localises to the endoplasmic reticulum. In terms of biological role, component of the BLOC-1 complex, a complex that is required for normal biogenesis of lysosome-related organelles (LRO), such as platelet dense granules and melanosomes. In concert with the AP-3 complex, the BLOC-1 complex is required to target membrane protein cargos into vesicles assembled at cell bodies for delivery into neurites and nerve terminals. The BLOC-1 complex, in association with SNARE proteins, is also proposed to be involved in neurite extension. Associates with the BLOC-2 complex to facilitate the transport of TYRP1 independent of AP-3 function. Plays a role in synaptic vesicle trafficking and in neurotransmitter release. Plays a role in the regulation of cell surface exposure of DRD2. May play a role in actin cytoskeleton reorganization and neurite outgrowth. May modulate MAPK8 phosphorylation. Appears to promote neuronal transmission and viability through regulating the expression of SNAP25 and SYN1, modulating PI3-kinase-Akt signaling and influencing glutamatergic release. Regulates the expression of SYN1 through binding to its promoter. Modulates prefrontal cortical activity via the dopamine/D2 pathway. The chain is Dysbindin (Dtnbp1) from Rattus norvegicus (Rat).